A 392-amino-acid polypeptide reads, in one-letter code: Probable protein phosphatase 2C 22 (392 aa).

The interval 1-26 (MEETRGISDPENGSSSYGGKPPNPLS) is disordered. A PPM-type phosphatase domain is found at 89 to 356 (RSGAWSDIGS…DNVTAVVVCL (268 aa)). Mn(2+)-binding residues include Asp-133, Gly-134, Asp-304, and Asp-347.

This sequence belongs to the PP2C family. Mg(2+) serves as cofactor. Mn(2+) is required as a cofactor.

It catalyses the reaction O-phospho-L-seryl-[protein] + H2O = L-seryl-[protein] + phosphate. The enzyme catalyses O-phospho-L-threonyl-[protein] + H2O = L-threonyl-[protein] + phosphate. The protein is Probable protein phosphatase 2C 22 of Arabidopsis thaliana (Mouse-ear cress).